Here is a 360-residue protein sequence, read N- to C-terminus: MSQTTLKRTPLFDIIAPTGKMVDFAGFEMPVLFSSIKEEHTAVRERVGMFDVSHMGELFVSGSDALAFLQQTLSNDISKIAIGQAQYNVLCQEDGGTVDDLLVYRLDEQDYLLVVNASNIEKDEAHLRQYLTGDVLLENQSDAYGQIAVQGPKAVEVLQELTALKLEDIKFFRFAQGELAGVEMLVSRSGYTGEDGFELYMPSADASAVWNALLEADVVPCGLGARDTLRFEACLPLYGHELSATISPIEAGMGFAVKPQVKSFVGSEVLVKQKEDGPRRQLIGLELTDKGIARQDAPVLVNGETIGFVTTGTLPPTIGKAIALALVPTEYATEETFEIEVRGKKLAAKRIDTPFYRRSK.

The protein belongs to the GcvT family. In terms of assembly, the glycine cleavage system is composed of four proteins: P, T, L and H.

The catalysed reaction is N(6)-[(R)-S(8)-aminomethyldihydrolipoyl]-L-lysyl-[protein] + (6S)-5,6,7,8-tetrahydrofolate = N(6)-[(R)-dihydrolipoyl]-L-lysyl-[protein] + (6R)-5,10-methylene-5,6,7,8-tetrahydrofolate + NH4(+). The glycine cleavage system catalyzes the degradation of glycine. This Exiguobacterium sibiricum (strain DSM 17290 / CCUG 55495 / CIP 109462 / JCM 13490 / 255-15) protein is Aminomethyltransferase.